A 473-amino-acid polypeptide reads, in one-letter code: Photosystem II CP43 reaction center protein (473 aa).

A propeptide spanning residues 1-14 (MKTLYSLRRFYPVE) is cleaved from the precursor. An N-acetylthreonine modification is found at T15. A Phosphothreonine modification is found at T15. 5 consecutive transmembrane segments (helical) span residues 69 to 93 (LFEVAHFVPEKPMYEQGLILLPHLA), 134 to 155 (LLGPETLEESFPFFGYVWKDRN), 178 to 200 (KALYFGGVYDTWAPGGGDVRKIT), 255 to 275 (KPFAWARRAFVWSGEAYLSYS), and 291 to 312 (WFNNTAYPSEFYGPTGPEASQA). E367 serves as a coordination point for [CaMn4O5] cluster. A helical transmembrane segment spans residues 447–471 (RARAAAAGFEKGIDRDFEPVLSMTP).

This sequence belongs to the PsbB/PsbC family. PsbC subfamily. PSII is composed of 1 copy each of membrane proteins PsbA, PsbB, PsbC, PsbD, PsbE, PsbF, PsbH, PsbI, PsbJ, PsbK, PsbL, PsbM, PsbT, PsbX, PsbY, PsbZ, Psb30/Ycf12, at least 3 peripheral proteins of the oxygen-evolving complex and a large number of cofactors. It forms dimeric complexes. It depends on Binds multiple chlorophylls and provides some of the ligands for the Ca-4Mn-5O cluster of the oxygen-evolving complex. It may also provide a ligand for a Cl- that is required for oxygen evolution. PSII binds additional chlorophylls, carotenoids and specific lipids. as a cofactor.

It localises to the plastid. Its subcellular location is the chloroplast thylakoid membrane. One of the components of the core complex of photosystem II (PSII). It binds chlorophyll and helps catalyze the primary light-induced photochemical processes of PSII. PSII is a light-driven water:plastoquinone oxidoreductase, using light energy to abstract electrons from H(2)O, generating O(2) and a proton gradient subsequently used for ATP formation. The chain is Photosystem II CP43 reaction center protein from Calycanthus floridus var. glaucus (Eastern sweetshrub).